Reading from the N-terminus, the 292-residue chain is Elongation factor Ts (292 aa).

The interval 79 to 82 (TDFV) is involved in Mg(2+) ion dislocation from EF-Tu.

Belongs to the EF-Ts family.

Its subcellular location is the cytoplasm. Associates with the EF-Tu.GDP complex and induces the exchange of GDP to GTP. It remains bound to the aminoacyl-tRNA.EF-Tu.GTP complex up to the GTP hydrolysis stage on the ribosome. In Idiomarina loihiensis (strain ATCC BAA-735 / DSM 15497 / L2-TR), this protein is Elongation factor Ts (tsf).